Reading from the N-terminus, the 400-residue chain is Elongation factor Tu (400 aa).

In terms of domain architecture, tr-type G spans 10-209; that stretch reads KPHVNIGTIG…VVDKYIPTPQ (200 aa). The G1 stretch occupies residues 19-26; sequence GHVDHGKT. 19 to 26 lines the GTP pocket; that stretch reads GHVDHGKT. Thr-26 is a Mg(2+) binding site. Residues 60–64 are G2; it reads GITIN. The G3 stretch occupies residues 81 to 84; that stretch reads DCPG. Residues 81-85 and 136-139 each bind GTP; these read DCPGH and NKVD. The segment at 136 to 139 is G4; it reads NKVD. Residues 174-176 form a G5 region; that stretch reads SAL.

It belongs to the TRAFAC class translation factor GTPase superfamily. Classic translation factor GTPase family. EF-Tu/EF-1A subfamily. As to quaternary structure, monomer.

The protein localises to the cytoplasm. It carries out the reaction GTP + H2O = GDP + phosphate + H(+). Its function is as follows. GTP hydrolase that promotes the GTP-dependent binding of aminoacyl-tRNA to the A-site of ribosomes during protein biosynthesis. The protein is Elongation factor Tu of Caldicellulosiruptor saccharolyticus (strain ATCC 43494 / DSM 8903 / Tp8T 6331).